We begin with the raw amino-acid sequence, 217 residues long: Trichothecene biosynthesis transcription regulator TRI6 (217 aa).

A C2H2-type zinc finger spans residues 185–215 (VRCPWHDQEGQQCLRVFSRVDNMRDHYRRIH).

It localises to the nucleus. Functionally, transcriptional activator of part of the core trichothecene biosynthesis cluster. The polypeptide is Trichothecene biosynthesis transcription regulator TRI6 (Fusarium sporotrichioides).